Here is a 393-residue protein sequence, read N- to C-terminus: Beta-1,4-galactosyltransferase 3 (393 aa).

Residues 1–10 are Cytoplasmic-facing; the sequence is MLRRLLERPC. The helical; Signal-anchor for type II membrane protein transmembrane segment at 11 to 31 threads the bilayer; that stretch reads TLALLVGSQLAVMMYLSLGGF. Residues 32–393 are Lumenal-facing; it reads RSLSALFGRD…ANHTALRGSH (362 aa). Residue Asn-57 is glycosylated (N-linked (GlcNAc...) asparagine). An intrachain disulfide couples Cys-77 to Cys-119. UDP-alpha-D-galactose is bound at residue 130 to 134; that stretch reads PHRAR. N-linked (GlcNAc...) asparagine glycosylation is present at Asn-166. Residues 169–171, 196–197, Tyr-226, and Trp-258 contribute to the UDP-alpha-D-galactose site; these read FNR and VD. A disulfide bond links Cys-190 and Cys-209. Mn(2+) is bound at residue Asp-197. Residue 260–263 participates in N-acetyl-D-glucosamine binding; sequence GEDD. His-291 serves as a coordination point for Mn(2+). Position 291–293 (291–293) interacts with UDP-alpha-D-galactose; it reads HRG. An N-acetyl-D-glucosamine-binding site is contributed by Arg-303. Residues Asn-337 and Asn-385 are each glycosylated (N-linked (GlcNAc...) asparagine). A disordered region spans residues 339–393; that stretch reads TADIGTDPRGPRAPSGPRYPPGSSQAFRQEMLQRRPPARPGPLSTANHTALRGSH.

Belongs to the glycosyltransferase 7 family. Requires Mn(2+) as cofactor. As to expression, found in various tissues. Highest expression in placenta, prostate, testis, ovary, intestine and muscle, and in fetal brain.

Its subcellular location is the golgi apparatus. It is found in the golgi stack membrane. It catalyses the reaction an N-acetyl-beta-D-glucosaminyl derivative + UDP-alpha-D-galactose = a beta-D-galactosyl-(1-&gt;4)-N-acetyl-beta-D-glucosaminyl derivative + UDP + H(+). The catalysed reaction is N-acetyl-D-glucosamine + UDP-alpha-D-galactose = beta-D-galactosyl-(1-&gt;4)-N-acetyl-D-glucosamine + UDP + H(+). It carries out the reaction a beta-D-GlcNAc-(1-&gt;3)-beta-D-Gal-(1-&gt;4)-beta-D-Glc-(1&lt;-&gt;1)-Cer(d18:1(4E)) + UDP-alpha-D-galactose = a neolactoside nLc4Cer(d18:1(4E)) + UDP + H(+). The enzyme catalyses a beta-D-glucosylceramide + UDP-alpha-D-galactose = a beta-D-galactosyl-(1-&gt;4)-beta-D-glucosyl-(1&lt;-&gt;1)-ceramide + UDP + H(+). It catalyses the reaction a neolactoside IV(3)-beta-GlcNAc-nLc4Cer + UDP-alpha-D-galactose = a neolactoside nLc6Cer + UDP + H(+). It functions in the pathway protein modification; protein glycosylation. Its function is as follows. Responsible for the synthesis of complex-type N-linked oligosaccharides in many glycoproteins as well as the carbohydrate moieties of glycolipids. The polypeptide is Beta-1,4-galactosyltransferase 3 (Homo sapiens (Human)).